The sequence spans 145 residues: Salt stress-induced protein (145 aa).

Residues Leu3 to Pro145 enclose the Jacalin-type lectin domain. Tandem repeats lie at residues Ile6–Ser15 and Ile54–Ser64. The 2 X approximate repeats, Gly-rich stretch occupies residues Ile6 to Ser64.

In terms of tissue distribution, sheaths and roots from mature plants and seedlings.

In Oryza sativa subsp. indica (Rice), this protein is Salt stress-induced protein (SALT).